The following is a 341-amino-acid chain: UDP-N-acetylenolpyruvoylglucosamine reductase (341 aa).

The 171-residue stretch at 15–185 folds into the FAD-binding PCMH-type domain; sequence VEQSCLSLIE…TAVGLRLPKA (171 aa). Arg161 is an active-site residue. The active-site Proton donor is Ser231. Glu327 is a catalytic residue.

This sequence belongs to the MurB family. FAD serves as cofactor.

The protein localises to the cytoplasm. The enzyme catalyses UDP-N-acetyl-alpha-D-muramate + NADP(+) = UDP-N-acetyl-3-O-(1-carboxyvinyl)-alpha-D-glucosamine + NADPH + H(+). It participates in cell wall biogenesis; peptidoglycan biosynthesis. In terms of biological role, cell wall formation. This is UDP-N-acetylenolpyruvoylglucosamine reductase from Shewanella sp. (strain ANA-3).